The primary structure comprises 929 residues: von Willebrand factor C and EGF domain-containing protein (929 aa).

The first 21 residues, 1 to 21 (MWARLLLHVAYILIPLLGSSA), serve as a signal peptide directing secretion. The 29-residue stretch at 70-98 (LCSFGCGSGICIAPNVCSCQDGEQGATCP) folds into the EGF-like 1 domain. The EGF-like 2; calcium-binding domain maps to 142–180 (DIDECLSSSCEGHCVNTEGGFVCECGPGMQLSADRHSCQ). Cystine bridges form between Cys-146-Cys-155, Cys-151-Cys-164, Cys-166-Cys-179, Cys-185-Cys-194, Cys-190-Cys-203, Cys-205-Cys-218, Cys-224-Cys-237, Cys-233-Cys-246, and Cys-248-Cys-261. An EGF-like 3; calcium-binding domain is found at 181–219 (DTDECLGTPCQQRCKNSIGSYKCSCRAGFHLHGNRHSCI). The EGF-like 4; calcium-binding domain maps to 220 to 262 (DVNECRRPQERRVCHHTCHNTVGSFLCTCRPGFRLRSDRVSCE). Disordered regions lie at residues 291–317 (AGRP…RTIS) and 339–374 (PSSS…LGAG). The segment covering 339–353 (PSSSPLGTLGPPSLL) has biased composition (low complexity). VWFC domains lie at 376 to 433 (SSCW…PSCT), 433 to 494 (TGCF…GRCY), 491 to 552 (GRCY…FTCR), 558 to 618 (TGCS…PDCS), 619 to 677 (AGCT…PVCH), and 677 to 762 (HDCN…VNCS). N-linked (GlcNAc...) asparagine glycosylation is found at Asn-454 and Asn-464. The interval 731-774 (PLEEKQQPSPHGELAKAARNARGDTEVPVNCSSCPGPPSASPTR) is disordered. Basic and acidic residues predominate over residues 743–755 (ELAKAARNARGDT). Asn-787 is a glycosylation site (N-linked (GlcNAc...) asparagine). The span at 791 to 807 (IQSASPSPPIAQTSSSP) shows a compositional bias: polar residues. Disordered regions lie at residues 791 to 861 (IQSA…SSTF) and 879 to 929 (AETP…NSTI). The span at 889–903 (LSETLTTSSSSQRLS) shows a compositional bias: low complexity.

It localises to the secreted. In terms of biological role, may be a regulatory element in the beta-catenin signaling pathway and a target for chemoprevention of hapatocellular carcinoma. This Mus musculus (Mouse) protein is von Willebrand factor C and EGF domain-containing protein (Vwce).